We begin with the raw amino-acid sequence, 632 residues long: 1-deoxy-D-xylulose-5-phosphate synthase (632 aa).

Residues His-87 and 128 to 130 (GHS) each bind thiamine diphosphate. A Mg(2+)-binding site is contributed by Asp-159. Thiamine diphosphate contacts are provided by residues 160–161 (GA), Asn-188, Phe-295, and Glu-377. Asn-188 serves as a coordination point for Mg(2+).

This sequence belongs to the transketolase family. DXPS subfamily. In terms of assembly, homodimer. Requires Mg(2+) as cofactor. It depends on thiamine diphosphate as a cofactor.

It catalyses the reaction D-glyceraldehyde 3-phosphate + pyruvate + H(+) = 1-deoxy-D-xylulose 5-phosphate + CO2. The protein operates within metabolic intermediate biosynthesis; 1-deoxy-D-xylulose 5-phosphate biosynthesis; 1-deoxy-D-xylulose 5-phosphate from D-glyceraldehyde 3-phosphate and pyruvate: step 1/1. Its function is as follows. Catalyzes the acyloin condensation reaction between C atoms 2 and 3 of pyruvate and glyceraldehyde 3-phosphate to yield 1-deoxy-D-xylulose-5-phosphate (DXP). This is 1-deoxy-D-xylulose-5-phosphate synthase from Stutzerimonas stutzeri (strain A1501) (Pseudomonas stutzeri).